Consider the following 149-residue polypeptide: Urease accessory protein UreE (149 aa).

It belongs to the UreE family.

It localises to the cytoplasm. Its function is as follows. Involved in urease metallocenter assembly. Binds nickel. Probably functions as a nickel donor during metallocenter assembly. The sequence is that of Urease accessory protein UreE from Ruegeria pomeroyi (strain ATCC 700808 / DSM 15171 / DSS-3) (Silicibacter pomeroyi).